We begin with the raw amino-acid sequence, 117 residues long: MPRAKSSVVSRKRHKKILKLAKGYFGAKSKLFRVAKQQVMKSLMYAYRDRRARKREFRKLWITRINAAARMHGLTYSRMMNGLKKAGVEINRKMLADLAVNDKNAFAELVEIAKKNL.

The protein belongs to the bacterial ribosomal protein bL20 family.

Binds directly to 23S ribosomal RNA and is necessary for the in vitro assembly process of the 50S ribosomal subunit. It is not involved in the protein synthesizing functions of that subunit. This is Large ribosomal subunit protein bL20 from Carboxydothermus hydrogenoformans (strain ATCC BAA-161 / DSM 6008 / Z-2901).